A 133-amino-acid polypeptide reads, in one-letter code: MTDEQIYAFCDANKDDIRCKCIYPDKSIVRIGIDTRLPYYCWYEPCKRSDALLPASLKKNITKCNVSDCTISLGNVSITDSKLDVNNVCDSKRVATENIAVRYLNQEIRYPIIDIKWLPIGLLALAILILAFF.

The Virion surface segment spans residues 1–111 (MTDEQIYAFC…RYLNQEIRYP (111 aa)). A helical; Signal-anchor transmembrane segment spans residues 112-132 (IIDIKWLPIGLLALAILILAF).

The protein belongs to the orthopoxvirus OPG104 family. Part of a stable entry-fusion complex (EFC) which is at least composed of proteins OPG143, OPG147, OPG155, OPG086, OPG094, OPG107, OPG104, and OPG099. Formation of the viral membrane is necessary for the assembly of the complex.

The protein localises to the virion membrane. Its function is as follows. Envelope protein part of the entry-fusion complex responsible for the virus membrane fusion with host cell membrane during virus entry. Also plays a role in cell-cell fusion (syncytium formation). This Homo sapiens (Human) protein is Protein OPG104 (OPG104).